Here is a 232-residue protein sequence, read N- to C-terminus: Large ribosomal subunit protein uL1 (232 aa).

Belongs to the universal ribosomal protein uL1 family. Part of the 50S ribosomal subunit.

Binds directly to 23S rRNA. The L1 stalk is quite mobile in the ribosome, and is involved in E site tRNA release. Functionally, protein L1 is also a translational repressor protein, it controls the translation of the L11 operon by binding to its mRNA. This chain is Large ribosomal subunit protein uL1, found in Jannaschia sp. (strain CCS1).